Here is a 436-residue protein sequence, read N- to C-terminus: MTASLVVLPSLWLILIIFTAPYTHCTQSGIYIDNGKDQTVMERVLTDDDKLDVSHEILEFLGIAARPLHHKSHGLSLRKSAPKFLLDVYYRITAEEGLAIKNKSDHSRSKRDANESEQNFITDLDKRAIDESDIIMTFLNKRNHNVEEMRHEHGRRLWFDVNNIPTDNYLMMAELRIYQNSNEGKWTTTNKQFTVTVYMLRSGGSAPNMLEPLSSVNTTGDYVGWLELNVTEALHDWRVNSNENHGIYIGAHALNKPEREIKLDDIGLIHRRTKVDDENQPFMIGFFRGPELIKSTSGHSTQKRTKRSTLHQRKKSKSEPVNPFIENSIENTRSCQMQTLYIDFKDLGWHDWIIAPEGYGAFYCSGECNFPLNAHMNATNHAIVQTLVHLLEPKRVPKPCCAPTRLGALPVLYHLNDENVNLKKYRNMIVKSCGCH.

Residues 1 to 27 (MTASLVVLPSLWLILIIFTAPYTHCTQ) form the signal peptide. Positions 28 to 317 (SGIYIDNGKD…STLHQRKKSK (290 aa)) are excised as a propeptide. Asn-102, Asn-114, Asn-217, and Asn-229 each carry an N-linked (GlcNAc...) asparagine glycan. The tract at residues 293–322 (IKSTSGHSTQKRTKRSTLHQRKKSKSEPVN) is disordered. The segment covering 301–316 (TQKRTKRSTLHQRKKS) has biased composition (basic residues). Intrachain disulfides connect Cys-335–Cys-401, Cys-364–Cys-433, and Cys-368–Cys-435. A glycan (N-linked (GlcNAc...) asparagine) is linked at Asn-377.

It belongs to the TGF-beta family. Homodimer; disulfide-linked.

Its subcellular location is the secreted. The sequence is that of Protein 60A (gbb) from Drosophila virilis (Fruit fly).